A 310-amino-acid chain; its full sequence is Conjugation stage-specific protein (310 aa).

It belongs to the archaeal Rpo3/eukaryotic RPB3 RNA polymerase subunit family.

Its subcellular location is the nucleus. Functionally, may be a stage-specific RNA polymerase subunit. The sequence is that of Conjugation stage-specific protein (CNJC) from Tetrahymena thermophila.